The sequence spans 350 residues: Ion-translocating oxidoreductase complex subunit D (350 aa).

5 consecutive transmembrane segments (helical) span residues 20–40 (IMML…WFFG), 42–62 (GTLF…AAVL), 68–88 (PIAA…LAVS), 89–109 (IPPL…VIIA), and 123–143 (PAMI…TSWL). An FMN phosphoryl threonine modification is found at Thr-187. The next 5 helical transmembrane spans lie at 215-235 (LAGA…VWLL), 244-264 (IPVS…AFAG), 267-287 (LASP…FFIL), 301-321 (LIFG…GGYP), and 322-342 (DGVA…DYYT).

The protein belongs to the NqrB/RnfD family. As to quaternary structure, the complex is composed of six subunits: RnfA, RnfB, RnfC, RnfD, RnfE and RnfG. It depends on FMN as a cofactor.

It localises to the cell inner membrane. In terms of biological role, part of a membrane-bound complex that couples electron transfer with translocation of ions across the membrane. The protein is Ion-translocating oxidoreductase complex subunit D of Citrobacter koseri (strain ATCC BAA-895 / CDC 4225-83 / SGSC4696).